A 228-amino-acid polypeptide reads, in one-letter code: Large ribosomal subunit protein bL25 (228 aa).

The span at 1–10 (MNSLDANTRN) shows a compositional bias: polar residues. 2 disordered regions span residues 1–20 (MNSLDANTRNTKSKGDVRSL) and 187–228 (MKEP…EEKK). Over residues 202–228 (EDGKEAAPAAEGDKKDDGEKKATEEKK) the composition is skewed to basic and acidic residues.

Belongs to the bacterial ribosomal protein bL25 family. CTC subfamily. As to quaternary structure, part of the 50S ribosomal subunit; part of the 5S rRNA/L5/L18/L25 subcomplex. Contacts the 5S rRNA. Binds to the 5S rRNA independently of L5 and L18.

Functionally, this is one of the proteins that binds to the 5S RNA in the ribosome where it forms part of the central protuberance. The sequence is that of Large ribosomal subunit protein bL25 from Pelagibacter ubique (strain HTCC1062).